We begin with the raw amino-acid sequence, 428 residues long: Kynureninase (428 aa).

Pyridoxal 5'-phosphate is bound by residues T104, T105, 132–135 (FPSD), D213, H216, and Y238. K239 carries the N6-(pyridoxal phosphate)lysine modification. Pyridoxal 5'-phosphate-binding residues include W267 and T295.

Belongs to the kynureninase family. Homodimer. Pyridoxal 5'-phosphate is required as a cofactor.

The catalysed reaction is L-kynurenine + H2O = anthranilate + L-alanine + H(+). It catalyses the reaction 3-hydroxy-L-kynurenine + H2O = 3-hydroxyanthranilate + L-alanine + H(+). Its pathway is amino-acid degradation; L-kynurenine degradation; L-alanine and anthranilate from L-kynurenine: step 1/1. It functions in the pathway cofactor biosynthesis; NAD(+) biosynthesis; quinolinate from L-kynurenine: step 2/3. Catalyzes the cleavage of L-kynurenine (L-Kyn) and L-3-hydroxykynurenine (L-3OHKyn) into anthranilic acid (AA) and 3-hydroxyanthranilic acid (3-OHAA), respectively. The protein is Kynureninase of Bacillus anthracis.